Consider the following 349-residue polypeptide: Shematrin-like protein 1 (349 aa).

The signal sequence occupies residues 1 to 16 (MLKLVCAVFLIATVSA).

In terms of tissue distribution, prismatic layer of shell (at protein level).

The protein localises to the secreted. This chain is Shematrin-like protein 1, found in Margaritifera margaritifera (Freshwater pearl mussel).